A 202-amino-acid polypeptide reads, in one-letter code: Superoxide dismutase [Mn] (202 aa).

Residue H27 coordinates Mn(2+). Residues T34 and T70 each carry the phosphothreonine modification. Positions 82, 164, and 168 each coordinate Mn(2+).

This sequence belongs to the iron/manganese superoxide dismutase family. As to quaternary structure, homodimer. The cofactor is Mn(2+).

The catalysed reaction is 2 superoxide + 2 H(+) = H2O2 + O2. Its function is as follows. Destroys superoxide anion radicals which are normally produced within the cells and which are toxic to biological systems. The chain is Superoxide dismutase [Mn] (sodA) from Halalkalibacterium halodurans (strain ATCC BAA-125 / DSM 18197 / FERM 7344 / JCM 9153 / C-125) (Bacillus halodurans).